The following is a 658-amino-acid chain: Structure-specific endonuclease subunit SLX1 (658 aa).

Residues 12-92 (PFYACYFLRS…AKPHLSRHLK (81 aa)) form the GIY-YIG domain. Disordered stretches follow at residues 29–52 (YIGS…QGAY), 239–269 (GVAE…ETLP), 288–328 (PIPQ…NGVD), and 594–658 (TTSR…IDLT). Basic and acidic residues-rich tracts occupy residues 308–324 (KLSD…HDAE) and 627–640 (SKID…DTKK). Polar residues predominate over residues 641 to 652 (NTTQKAKSNETS).

This sequence belongs to the SLX1 family. In terms of assembly, forms a heterodimer with SLX4. The cofactor is a divalent metal cation.

Its subcellular location is the nucleus. Catalytic subunit of the SLX1-SLX4 structure-specific endonuclease that resolves DNA secondary structures generated during DNA repair and recombination. Has endonuclease activity towards branched DNA substrates, introducing single-strand cuts in duplex DNA close to junctions with ss-DNA. The sequence is that of Structure-specific endonuclease subunit SLX1 from Mycosarcoma maydis (Corn smut fungus).